We begin with the raw amino-acid sequence, 307 residues long: Elongation factor Ts (307 aa).

The segment at 79 to 82 (TDFV) is involved in Mg(2+) ion dislocation from EF-Tu.

Belongs to the EF-Ts family.

It localises to the cytoplasm. Associates with the EF-Tu.GDP complex and induces the exchange of GDP to GTP. It remains bound to the aminoacyl-tRNA.EF-Tu.GTP complex up to the GTP hydrolysis stage on the ribosome. The chain is Elongation factor Ts from Sinorhizobium fredii (strain NBRC 101917 / NGR234).